A 340-amino-acid chain; its full sequence is Methionyl-tRNA formyltransferase (340 aa).

110–113 contacts (6S)-5,6,7,8-tetrahydrofolate; that stretch reads SLLP.

The protein belongs to the Fmt family.

The catalysed reaction is L-methionyl-tRNA(fMet) + (6R)-10-formyltetrahydrofolate = N-formyl-L-methionyl-tRNA(fMet) + (6S)-5,6,7,8-tetrahydrofolate + H(+). Functionally, attaches a formyl group to the free amino group of methionyl-tRNA(fMet). The formyl group appears to play a dual role in the initiator identity of N-formylmethionyl-tRNA by promoting its recognition by IF2 and preventing the misappropriation of this tRNA by the elongation apparatus. This Synechococcus sp. (strain WH7803) protein is Methionyl-tRNA formyltransferase.